Reading from the N-terminus, the 261-residue chain is Cytochrome c oxidase subunit 3 (261 aa).

At 1–15 the chain is on the mitochondrial matrix side; it reads MTHQTHAYHMVNPSP. A helical transmembrane segment spans residues 16 to 34; sequence WPLTGALSALLMTSGLIMW. Residues 35-40 lie on the Mitochondrial intermembrane side of the membrane; it reads FHFNST. The chain crosses the membrane as a helical span at residues 41–66; that stretch reads TLLTLGLTTNMLTMYQWWRDVIREST. At 67 to 72 the chain is on the mitochondrial matrix side; the sequence is FQGHHT. Residues 73-105 form a helical membrane-spanning segment; the sequence is PTVQKGLRYGMILFIISEVLFFTGFFWAFYHSS. At 106 to 128 the chain is on the mitochondrial intermembrane side; the sequence is LAPTPELGGCWPPTGIHPLNPLE. A helical transmembrane segment spans residues 129–152; that stretch reads VPLLNTSVLLASGVSITWAHHSLM. The Mitochondrial matrix portion of the chain corresponds to 153 to 155; the sequence is EGN. The helical transmembrane segment at 156 to 183 threads the bilayer; it reads RNPMLQALFITIALGIYFTLLQASEYYE. Residues 184-190 lie on the Mitochondrial intermembrane side of the membrane; sequence APFTISD. A helical membrane pass occupies residues 191-223; it reads GVYGSTFFVATGFHGLHVIIGSTFLIVCFFRQL. Residues 224 to 232 lie on the Mitochondrial matrix side of the membrane; that stretch reads KFHFTSNHH. A helical transmembrane segment spans residues 233–256; sequence FGFEAAAWYWHFVDVVWLFLYVSI. Residues 257-261 lie on the Mitochondrial intermembrane side of the membrane; that stretch reads YWWGS.

Belongs to the cytochrome c oxidase subunit 3 family. Component of the cytochrome c oxidase (complex IV, CIV), a multisubunit enzyme composed of 14 subunits. The complex is composed of a catalytic core of 3 subunits MT-CO1, MT-CO2 and MT-CO3, encoded in the mitochondrial DNA, and 11 supernumerary subunits COX4I, COX5A, COX5B, COX6A, COX6B, COX6C, COX7A, COX7B, COX7C, COX8 and NDUFA4, which are encoded in the nuclear genome. The complex exists as a monomer or a dimer and forms supercomplexes (SCs) in the inner mitochondrial membrane with NADH-ubiquinone oxidoreductase (complex I, CI) and ubiquinol-cytochrome c oxidoreductase (cytochrome b-c1 complex, complex III, CIII), resulting in different assemblies (supercomplex SCI(1)III(2)IV(1) and megacomplex MCI(2)III(2)IV(2)).

Its subcellular location is the mitochondrion inner membrane. The catalysed reaction is 4 Fe(II)-[cytochrome c] + O2 + 8 H(+)(in) = 4 Fe(III)-[cytochrome c] + 2 H2O + 4 H(+)(out). Its function is as follows. Component of the cytochrome c oxidase, the last enzyme in the mitochondrial electron transport chain which drives oxidative phosphorylation. The respiratory chain contains 3 multisubunit complexes succinate dehydrogenase (complex II, CII), ubiquinol-cytochrome c oxidoreductase (cytochrome b-c1 complex, complex III, CIII) and cytochrome c oxidase (complex IV, CIV), that cooperate to transfer electrons derived from NADH and succinate to molecular oxygen, creating an electrochemical gradient over the inner membrane that drives transmembrane transport and the ATP synthase. Cytochrome c oxidase is the component of the respiratory chain that catalyzes the reduction of oxygen to water. Electrons originating from reduced cytochrome c in the intermembrane space (IMS) are transferred via the dinuclear copper A center (CU(A)) of subunit 2 and heme A of subunit 1 to the active site in subunit 1, a binuclear center (BNC) formed by heme A3 and copper B (CU(B)). The BNC reduces molecular oxygen to 2 water molecules using 4 electrons from cytochrome c in the IMS and 4 protons from the mitochondrial matrix. This Madoqua guentheri (Guenther's dik-dik) protein is Cytochrome c oxidase subunit 3 (MT-CO3).